Consider the following 306-residue polypeptide: Ornithine carbamoyltransferase (306 aa).

Carbamoyl phosphate-binding positions include 53–56, Q80, R104, and 131–134; these read STRT and HPCQ. L-ornithine is bound by residues N162, D219, and 223–224; that span reads SM. Carbamoyl phosphate contacts are provided by residues 259–260 and R287; that span reads CL.

Belongs to the aspartate/ornithine carbamoyltransferase superfamily. OTCase family.

Its subcellular location is the cytoplasm. The enzyme catalyses carbamoyl phosphate + L-ornithine = L-citrulline + phosphate + H(+). It functions in the pathway amino-acid biosynthesis; L-arginine biosynthesis; L-arginine from L-ornithine and carbamoyl phosphate: step 1/3. Its function is as follows. Reversibly catalyzes the transfer of the carbamoyl group from carbamoyl phosphate (CP) to the N(epsilon) atom of ornithine (ORN) to produce L-citrulline. The chain is Ornithine carbamoyltransferase from Psychrobacter sp. (strain PRwf-1).